Reading from the N-terminus, the 174-residue chain is Shikimate kinase (174 aa).

An ATP-binding site is contributed by 15–20 (GTGKST). Ser-19 provides a ligand contact to Mg(2+). The substrate site is built by Asp-37, Arg-61, and Gly-82. Position 120 (Arg-120) interacts with ATP. Arg-138 contributes to the substrate binding site.

Belongs to the shikimate kinase family. As to quaternary structure, monomer. The cofactor is Mg(2+).

It is found in the cytoplasm. It carries out the reaction shikimate + ATP = 3-phosphoshikimate + ADP + H(+). It participates in metabolic intermediate biosynthesis; chorismate biosynthesis; chorismate from D-erythrose 4-phosphate and phosphoenolpyruvate: step 5/7. Its function is as follows. Catalyzes the specific phosphorylation of the 3-hydroxyl group of shikimic acid using ATP as a cosubstrate. The polypeptide is Shikimate kinase (Staphylococcus aureus (strain NCTC 8325 / PS 47)).